The chain runs to 933 residues: Phospholipase SGR2 (933 aa).

A compositionally biased stretch (basic and acidic residues) spans 1-14 (MEDRETHLGTREVN). Residues 1–22 (MEDRETHLGTREVNETSPDLLK) form a disordered region. S444 is a catalytic residue. Disordered stretches follow at residues 475–517 (PDEE…GQDN) and 553–598 (RGGQ…ESVN). A compositionally biased stretch (polar residues) spans 505–517 (QLNNPEKITGQDN). Positions 553-563 (RGGQEDDHHDS) are enriched in basic and acidic residues. Residues 593 to 631 (DKESVNSNNEERIKLLQDEVNSLRSKVAQLLSENARILS) adopt a coiled-coil conformation. Residues 669–868 (LEFKVDTFFA…ALFIIKHLYR (200 aa)) form the DDHD domain. The disordered stretch occupies residues 871 to 903 (PDGPNSPTESTEGDDSPKDSSRPHSWIDRREAD). The segment covering 885 to 902 (DSPKDSSRPHSWIDRREA) has biased composition (basic and acidic residues).

Forms oligomers. Expressed in roots, hypocotyls, leaves, stems and floral buds, and, at low levels, in siliques.

Its subcellular location is the vacuole membrane. Its function is as follows. Involved in vacuolar formation or function (e.g. formation of vacuolar membrane 'bulbs'). Required for amyloplast sedimentation in the endodermis during shoot gravitropism, which are thus acting as statoliths. Particularly important for the negative gravitropism leading to leaf movement observed in darkness. In Arabidopsis thaliana (Mouse-ear cress), this protein is Phospholipase SGR2 (SGR2).